The following is a 302-amino-acid chain: Sulfate adenylyltransferase subunit 2 (302 aa).

This sequence belongs to the PAPS reductase family. CysD subfamily. In terms of assembly, heterodimer composed of CysD, the smaller subunit, and CysN.

It catalyses the reaction sulfate + ATP + H(+) = adenosine 5'-phosphosulfate + diphosphate. It functions in the pathway sulfur metabolism; hydrogen sulfide biosynthesis; sulfite from sulfate: step 1/3. Its function is as follows. With CysN forms the ATP sulfurylase (ATPS) that catalyzes the adenylation of sulfate producing adenosine 5'-phosphosulfate (APS) and diphosphate, the first enzymatic step in sulfur assimilation pathway. APS synthesis involves the formation of a high-energy phosphoric-sulfuric acid anhydride bond driven by GTP hydrolysis by CysN coupled to ATP hydrolysis by CysD. This chain is Sulfate adenylyltransferase subunit 2, found in Proteus mirabilis (strain HI4320).